A 125-amino-acid chain; its full sequence is Large ribosomal subunit protein bL20 (125 aa).

It belongs to the bacterial ribosomal protein bL20 family.

In terms of biological role, binds directly to 23S ribosomal RNA and is necessary for the in vitro assembly process of the 50S ribosomal subunit. It is not involved in the protein synthesizing functions of that subunit. The polypeptide is Large ribosomal subunit protein bL20 (Methylobacterium sp. (strain 4-46)).